Reading from the N-terminus, the 356-residue chain is MSTVTITDLARENVRNLTPYQSARRLGGNGDVWLNANEYPTAVEFQLTQQTLNRYPECQPKVVIENYAQYAGVKPEQVLVSRGADEGIELLIRAFCEPGKDAILYCPPTYGMYSVSAETIGVECRTVPTLDNWQLDLQGISDKLDGVKVVYVCSPNNPTGQLINPQDFRTLLELTRGKAIVVADEAYIEFCPQASLAGWLAEYPHLAILRTLSKAFALAGLRCGFTLANEEVINLLMKVIAPYPLSTPVADIAAQALSPQGIVAMRERVAQIITEREYLIAALKEIPCVEQVFDSETNYILARFKASSAVFKSLWDQGIILRDQNKQPSLSGCLRITVGTREESQCVIDALRAEQV.

Residue Lys214 is modified to N6-(pyridoxal phosphate)lysine.

The protein belongs to the class-II pyridoxal-phosphate-dependent aminotransferase family. Histidinol-phosphate aminotransferase subfamily. Homodimer. Requires pyridoxal 5'-phosphate as cofactor.

The catalysed reaction is L-histidinol phosphate + 2-oxoglutarate = 3-(imidazol-4-yl)-2-oxopropyl phosphate + L-glutamate. It functions in the pathway amino-acid biosynthesis; L-histidine biosynthesis; L-histidine from 5-phospho-alpha-D-ribose 1-diphosphate: step 7/9. The polypeptide is Histidinol-phosphate aminotransferase (Escherichia coli O6:K15:H31 (strain 536 / UPEC)).